We begin with the raw amino-acid sequence, 451 residues long: D-inositol 3-phosphate glycosyltransferase (451 aa).

1D-myo-inositol 3-phosphate is bound at residue histidine 37. Residues 43 to 44 (QP) and glycine 51 contribute to the UDP-N-acetyl-alpha-D-glucosamine site. Residues 48–53 (DAGGMN), lysine 106, tyrosine 138, threonine 162, and arginine 182 contribute to the 1D-myo-inositol 3-phosphate site. UDP-N-acetyl-alpha-D-glucosamine contacts are provided by arginine 259, lysine 264, and arginine 323. Positions 332, 333, and 335 each coordinate Mg(2+). Positions 345 and 353 each coordinate UDP-N-acetyl-alpha-D-glucosamine. Threonine 359 is a Mg(2+) binding site.

Belongs to the glycosyltransferase group 1 family. MshA subfamily. As to quaternary structure, homodimer.

It carries out the reaction 1D-myo-inositol 3-phosphate + UDP-N-acetyl-alpha-D-glucosamine = 1D-myo-inositol 2-acetamido-2-deoxy-alpha-D-glucopyranoside 3-phosphate + UDP + H(+). Its function is as follows. Catalyzes the transfer of a N-acetyl-glucosamine moiety to 1D-myo-inositol 3-phosphate to produce 1D-myo-inositol 2-acetamido-2-deoxy-glucopyranoside 3-phosphate in the mycothiol biosynthesis pathway. The chain is D-inositol 3-phosphate glycosyltransferase from Corynebacterium kroppenstedtii (strain DSM 44385 / JCM 11950 / CIP 105744 / CCUG 35717).